We begin with the raw amino-acid sequence, 268 residues long: Putative F-box protein At3g23420 (268 aa).

The F-box domain occupies 5–51 (PRDLSDLPRNMAEEVLSRVPMTSLRRLRFTCKKWNTLSRCRSFAKKH).

This Arabidopsis thaliana (Mouse-ear cress) protein is Putative F-box protein At3g23420.